A 364-amino-acid polypeptide reads, in one-letter code: PqqA peptide cyclase (364 aa).

One can recognise a Radical SAM core domain in the interval 6 to 222 (VGAPAGMLIE…HARTRYAGGP (217 aa)). [4Fe-4S] cluster contacts are provided by cysteine 20, cysteine 24, and cysteine 27.

The protein belongs to the radical SAM superfamily. PqqE family. As to quaternary structure, interacts with PqqD. The interaction is necessary for activity of PqqE. [4Fe-4S] cluster is required as a cofactor.

The catalysed reaction is [PQQ precursor protein] + S-adenosyl-L-methionine = E-Y cross-linked-[PQQ precursor protein] + 5'-deoxyadenosine + L-methionine + H(+). Its pathway is cofactor biosynthesis; pyrroloquinoline quinone biosynthesis. In terms of biological role, catalyzes the cross-linking of a glutamate residue and a tyrosine residue in the PqqA protein as part of the biosynthesis of pyrroloquinoline quinone (PQQ). The polypeptide is PqqA peptide cyclase (Streptomyces rochei (Streptomyces parvullus)).